A 70-amino-acid polypeptide reads, in one-letter code: UPF0519 protein B (70 aa).

This sequence belongs to the UPF0519 family.

The protein is UPF0519 protein B (sigN122) of Dictyostelium discoideum (Social amoeba).